We begin with the raw amino-acid sequence, 132 residues long: UPF0201 protein MTH_433 (132 aa).

The protein belongs to the UPF0201 family.

The protein is UPF0201 protein MTH_433 of Methanothermobacter thermautotrophicus (strain ATCC 29096 / DSM 1053 / JCM 10044 / NBRC 100330 / Delta H) (Methanobacterium thermoautotrophicum).